The chain runs to 210 residues: Cyclin-U1-1 (210 aa).

Belongs to the cyclin family. Cyclin U/P subfamily. As to quaternary structure, interacts with CDKA-1. As to expression, expressed in roots and flowers. Expressed in the shoot apex, leaf primordia and young leaves.

The polypeptide is Cyclin-U1-1 (CYCU1-1) (Arabidopsis thaliana (Mouse-ear cress)).